We begin with the raw amino-acid sequence, 856 residues long: Facilitated trehalose transporter Tret1 (856 aa).

2 disordered regions span residues 1-29 (MSGR…LKEK) and 62-202 (DPFL…KATS). Topologically, residues 1-389 (MSGRDNRGAG…LEVYRPTTNP (389 aa)) are cytoplasmic. Positions 69–80 (VSPQRHPQTVRT) are enriched in polar residues. The span at 133–142 (EIREHRDRQQ) shows a compositional bias: basic and acidic residues. Positions 170–180 (GNSNTNSNKAA) are enriched in polar residues. Phosphoserine is present on residues Ser247, Ser248, Ser249, Ser319, and Ser321. The interval 326-345 (LTSRQHFQQQRSISTDSRKS) is disordered. The span at 329 to 340 (RQHFQQQRSIST) shows a compositional bias: polar residues. A helical membrane pass occupies residues 390–410 (IFIWTQVIAALSVSLGSLVVG). Topologically, residues 411–439 (FVSAYTSPALVSMSDPNITSFTVTKDAGS) are extracellular. N-linked (GlcNAc...) asparagine glycosylation is present at Asn427. The helical transmembrane segment at 440–460 (WVGGIMPLAGLVGGVAGGPLI) threads the bilayer. The Cytoplasmic segment spans residues 461–472 (EYMGRRNTILAT). A helical transmembrane segment spans residues 473–493 (AVPFIVSSLLIACAVNVAMVL). Topologically, residues 494–496 (CGR) are extracellular. The chain crosses the membrane as a helical span at residues 497 to 517 (FLAGFCVGIASLSLPVYLGET). Topologically, residues 518 to 527 (VQPEVRGTLG) are cytoplasmic. The chain crosses the membrane as a helical span at residues 528–548 (LLPTAFGNIGILVCFVAGSFM). A glycan (N-linked (GlcNAc...) asparagine) is linked at Asn549. Over 549–551 (NWS) the chain is Extracellular. A helical membrane pass occupies residues 552-572 (MLAFLGAALPVPFLILMFLIP). The Cytoplasmic segment spans residues 573 to 635 (ETPRWYVSRG…ELLKRNNLKP (63 aa)). The chain crosses the membrane as a helical span at residues 636-656 (LSISLGLMFFQQFSGINAVIF). Residues 657–672 (YTVQIFKDAGSTIDGN) are Extracellular-facing. A helical membrane pass occupies residues 673 to 693 (VCTIIVGVVNFVATFIGILLI). The Cytoplasmic segment spans residues 694-699 (DRAGRK). A helical membrane pass occupies residues 700–720 (ILLYASDIAMVLTLFVLGGFF). At 721 to 739 (YCKAHGPDVSHLGWLPLTC) the chain is on the extracellular side. A helical membrane pass occupies residues 740 to 760 (FVVYILGFSVGFGPIPWLMMG). Residues 761 to 766 (EILPAK) lie on the Cytoplasmic side of the membrane. A helical transmembrane segment spans residues 767–787 (IRGAAASVATSFNWTCTFVVT). Over 788–800 (KTFQDLVGSLGAH) the chain is Extracellular. Residues 801–821 (GAFWLFGAICFVGLFFVILYV) traverse the membrane as a helical segment. Residues 822-856 (PETQGKTLEDIERKMMGRVRRMSSVANIKPLSFNM) are Cytoplasmic-facing. 2 positions are modified to phosphoserine: Ser844 and Ser845.

It belongs to the major facilitator superfamily. Sugar transporter (TC 2.A.1.1) family. Trehalose transporter subfamily.

The protein resides in the cell membrane. Low-capacity facilitative transporter for trehalose. Does not transport maltose, sucrose or lactose. Mediates the bidirectional transfer of trehalose. Responsible for the transport of trehalose synthesized in the fat body and the incorporation of trehalose into other tissues that require a carbon source, thereby regulating trehalose levels in the hemolymph. This chain is Facilitated trehalose transporter Tret1, found in Drosophila yakuba (Fruit fly).